The primary structure comprises 352 residues: Photosystem II D2 protein (352 aa).

Thr-2 is modified (N-acetylthreonine). Thr-2 bears the Phosphothreonine mark. The helical transmembrane segment at 40–60 (TAYLALGGWFTGTTFVTSWYT) threads the bilayer. Position 117 (His-117) interacts with chlorophyll a. The chain crosses the membrane as a helical span at residues 124-140 (GFMLRQFEIARSVKIRP). Pheophytin a contacts are provided by Gln-129 and Asn-142. Residues 152–165 (VFVSVFLIYPLGQS) form a helical membrane-spanning segment. A chlorophyll a-binding site is contributed by His-197. Residues 207-227 (AALLCAIHGATVENTLFEDGD) form a helical membrane-spanning segment. Residues His-214 and Phe-261 each coordinate a plastoquinone. His-214 provides a ligand contact to Fe cation. His-268 serves as a coordination point for Fe cation. Residues 278–294 (GLWMSAIGVVGLALNLR) form a helical membrane-spanning segment.

It belongs to the reaction center PufL/M/PsbA/D family. In terms of assembly, PSII is composed of 1 copy each of membrane proteins PsbA, PsbB, PsbC, PsbD, PsbE, PsbF, PsbH, PsbI, PsbJ, PsbK, PsbL, PsbM, PsbT, PsbX, PsbY, PsbZ, Psb30/Ycf12, at least 3 peripheral proteins of the oxygen-evolving complex and a large number of cofactors. It forms dimeric complexes. The cofactor is The D1/D2 heterodimer binds P680, chlorophylls that are the primary electron donor of PSII, and subsequent electron acceptors. It shares a non-heme iron and each subunit binds pheophytin, quinone, additional chlorophylls, carotenoids and lipids. There is also a Cl(-1) ion associated with D1 and D2, which is required for oxygen evolution. The PSII complex binds additional chlorophylls, carotenoids and specific lipids..

Its subcellular location is the plastid. The protein localises to the chloroplast thylakoid membrane. It catalyses the reaction 2 a plastoquinone + 4 hnu + 2 H2O = 2 a plastoquinol + O2. Its function is as follows. Photosystem II (PSII) is a light-driven water:plastoquinone oxidoreductase that uses light energy to abstract electrons from H(2)O, generating O(2) and a proton gradient subsequently used for ATP formation. It consists of a core antenna complex that captures photons, and an electron transfer chain that converts photonic excitation into a charge separation. The D1/D2 (PsbA/PsbD) reaction center heterodimer binds P680, the primary electron donor of PSII as well as several subsequent electron acceptors. D2 is needed for assembly of a stable PSII complex. The protein is Photosystem II D2 protein of Chlorella vulgaris (Green alga).